The following is a 287-amino-acid chain: ATP synthase gamma chain (287 aa).

The protein belongs to the ATPase gamma chain family. As to quaternary structure, F-type ATPases have 2 components, CF(1) - the catalytic core - and CF(0) - the membrane proton channel. CF(1) has five subunits: alpha(3), beta(3), gamma(1), delta(1), epsilon(1). CF(0) has three main subunits: a, b and c.

It is found in the cell membrane. In terms of biological role, produces ATP from ADP in the presence of a proton gradient across the membrane. The gamma chain is believed to be important in regulating ATPase activity and the flow of protons through the CF(0) complex. The sequence is that of ATP synthase gamma chain from Staphylococcus carnosus (strain TM300).